Consider the following 804-residue polypeptide: MYNHKTVEKKWQKYWAEHDTFKTGTDPKKKNYYALDMFPFPSGKGLHVGHPEGYTATDIVSRMKRAQGYNVLHPMGWDAFGLPTEQYALKTGEDPEKVTKENIANFKKQLNKLGFSYDWDREVTTSDPNYYKWTQWVFEQMYKKGLAYEAEVPVNWSPDLGTVVANEEIIDGKTERGGYPVYRRNMRQWMLKMTAYADRLLEDLDDLDWPEPVKEMQRNWIGRSEGAQVTFKVKDSDKTFDVFTTRPDTLFGVSYTVLAPESKLVQEITTPEQKEAVDAYIKKIESKSDLERTDLNKDKTGVFTGAYAVNPVNGKEVPIWISDYVLASYGTGAVMAVPAHDDRDYAFATKFGLPINRVIEGGNLEKEAFGGDGKHINSEFLDGLNNEEAKKRMIEWLEDHNVGEKKVNYKLRDWDFSRQRYWGEPIPVIHWEDGTTSLVPEDELPLRLPHATDIKPSGTPESPLANLTDWVNVVDENGRKGKRETNTMPNWAGSSWYYLRYIDPHNDKELADYDLLKKWLPVDLYIGGAEHAVRHLLYARFWHKVLYDLGVVPTKEPFQKLYNQGLILKNHEKMSKSKGNVVNPDEVIDEYGADSLRMYEMFMGPLDASIDWDDNGPASTKKFLDRVWRLFVNDLDLKAIPQEKIVDENDGELDKVYAETVKKVTEDFEALHFNTAISQMMVFMNAAQKAKTIPREYAEGFVQLLAPVAPHMMEEIWSVFGHDESIAYAKWPEYDPAKLVESTVEIMVQVNGKLRGKFKAAKDSDKDTLEKEALALDHVQKFLEGKDVKKVIVIPNKIVNIVAK.

A 'HIGH' region motif is present at residues Pro39–His50. Residues Lys573–Ser577 carry the 'KMSKS' region motif. Residue Lys576 coordinates ATP.

It belongs to the class-I aminoacyl-tRNA synthetase family.

The protein resides in the cytoplasm. It carries out the reaction tRNA(Leu) + L-leucine + ATP = L-leucyl-tRNA(Leu) + AMP + diphosphate. In Lactobacillus johnsonii (strain CNCM I-12250 / La1 / NCC 533), this protein is Leucine--tRNA ligase.